A 261-amino-acid polypeptide reads, in one-letter code: Cytochrome c oxidase subunit 3 (261 aa).

At 1–15 (MAHQAHSYHMVDPSP) the chain is on the mitochondrial matrix side. The chain crosses the membrane as a helical span at residues 16-34 (WPIFGATAALLTTSGLIMW). The Mitochondrial intermembrane portion of the chain corresponds to 35 to 40 (FHYNSL). Residues 41-66 (YLLTLGLLSMFLVMIQWWRDIVREST) traverse the membrane as a helical segment. The Mitochondrial matrix segment spans residues 67–72 (FQGHHT). A helical transmembrane segment spans residues 73–105 (PTVQKGLRYGMILFITSEAFFFLGFFWAFFHSS). Over 106 to 128 (LAPTPELGAQWPPTGINPLNPLE) the chain is Mitochondrial intermembrane. A helical membrane pass occupies residues 129–152 (VPLLNTAILLASGVTVTWAHHSIT). Over 153–155 (ESN) the chain is Mitochondrial matrix. A helical membrane pass occupies residues 156-183 (RKQAIHALSLTIILGFYFTALQAMEYHE). The Mitochondrial intermembrane segment spans residues 184–190 (ASFSIAD). Residues 191 to 223 (GVYGSTFFVATGFHGLHVIIGSSFLTVCLLRLI) traverse the membrane as a helical segment. Topologically, residues 224–232 (KFHFTTNHH) are mitochondrial matrix. Residues 233–256 (FGFEAAAWYWHFVDVIWLFLYMSI) form a helical membrane-spanning segment. Topologically, residues 257 to 261 (YWWGS) are mitochondrial intermembrane.

It belongs to the cytochrome c oxidase subunit 3 family. In terms of assembly, component of the cytochrome c oxidase (complex IV, CIV), a multisubunit enzyme composed of 14 subunits. The complex is composed of a catalytic core of 3 subunits MT-CO1, MT-CO2 and MT-CO3, encoded in the mitochondrial DNA, and 11 supernumerary subunits COX4I, COX5A, COX5B, COX6A, COX6B, COX6C, COX7A, COX7B, COX7C, COX8 and NDUFA4, which are encoded in the nuclear genome. The complex exists as a monomer or a dimer and forms supercomplexes (SCs) in the inner mitochondrial membrane with NADH-ubiquinone oxidoreductase (complex I, CI) and ubiquinol-cytochrome c oxidoreductase (cytochrome b-c1 complex, complex III, CIII), resulting in different assemblies (supercomplex SCI(1)III(2)IV(1) and megacomplex MCI(2)III(2)IV(2)).

It localises to the mitochondrion inner membrane. It carries out the reaction 4 Fe(II)-[cytochrome c] + O2 + 8 H(+)(in) = 4 Fe(III)-[cytochrome c] + 2 H2O + 4 H(+)(out). Its function is as follows. Component of the cytochrome c oxidase, the last enzyme in the mitochondrial electron transport chain which drives oxidative phosphorylation. The respiratory chain contains 3 multisubunit complexes succinate dehydrogenase (complex II, CII), ubiquinol-cytochrome c oxidoreductase (cytochrome b-c1 complex, complex III, CIII) and cytochrome c oxidase (complex IV, CIV), that cooperate to transfer electrons derived from NADH and succinate to molecular oxygen, creating an electrochemical gradient over the inner membrane that drives transmembrane transport and the ATP synthase. Cytochrome c oxidase is the component of the respiratory chain that catalyzes the reduction of oxygen to water. Electrons originating from reduced cytochrome c in the intermembrane space (IMS) are transferred via the dinuclear copper A center (CU(A)) of subunit 2 and heme A of subunit 1 to the active site in subunit 1, a binuclear center (BNC) formed by heme A3 and copper B (CU(B)). The BNC reduces molecular oxygen to 2 water molecules using 4 electrons from cytochrome c in the IMS and 4 protons from the mitochondrial matrix. The sequence is that of Cytochrome c oxidase subunit 3 (MT-CO3) from Struthio camelus (Common ostrich).